The chain runs to 479 residues: Ribosomal RNA small subunit methyltransferase F (479 aa).

Residues 125–131, Glu149, Asp176, and Asp194 each bind S-adenosyl-L-methionine; that span reads AAAPGSK. The active-site Nucleophile is the Cys247.

This sequence belongs to the class I-like SAM-binding methyltransferase superfamily. RsmB/NOP family.

It localises to the cytoplasm. It catalyses the reaction cytidine(1407) in 16S rRNA + S-adenosyl-L-methionine = 5-methylcytidine(1407) in 16S rRNA + S-adenosyl-L-homocysteine + H(+). Functionally, specifically methylates the cytosine at position 1407 (m5C1407) of 16S rRNA. This chain is Ribosomal RNA small subunit methyltransferase F, found in Shigella boydii serotype 18 (strain CDC 3083-94 / BS512).